Consider the following 54-residue polypeptide: Large ribosomal subunit protein bL33A (54 aa).

The protein belongs to the bacterial ribosomal protein bL33 family.

The chain is Large ribosomal subunit protein bL33A from Streptomyces griseus subsp. griseus (strain JCM 4626 / CBS 651.72 / NBRC 13350 / KCC S-0626 / ISP 5235).